We begin with the raw amino-acid sequence, 351 residues long: Protein-glutamate methylesterase/protein-glutamine glutaminase (351 aa).

One can recognise a Response regulatory domain in the interval 6-123 (RVLVVDDSPT…ARPFGDLADK (118 aa)). A 4-aspartylphosphate modification is found at D57. Residues 154 to 346 (YRAGRKVVAI…EEILKLTTAR (193 aa)) form the CheB-type methylesterase domain. Active-site residues include S166, H192, and D288.

Belongs to the CheB family. Post-translationally, phosphorylated by CheA. Phosphorylation of the N-terminal regulatory domain activates the methylesterase activity.

It localises to the cytoplasm. It carries out the reaction [protein]-L-glutamate 5-O-methyl ester + H2O = L-glutamyl-[protein] + methanol + H(+). The catalysed reaction is L-glutaminyl-[protein] + H2O = L-glutamyl-[protein] + NH4(+). Functionally, involved in chemotaxis. Part of a chemotaxis signal transduction system that modulates chemotaxis in response to various stimuli. Catalyzes the demethylation of specific methylglutamate residues introduced into the chemoreceptors (methyl-accepting chemotaxis proteins or MCP) by CheR. Also mediates the irreversible deamidation of specific glutamine residues to glutamic acid. This chain is Protein-glutamate methylesterase/protein-glutamine glutaminase, found in Agrobacterium fabrum (strain C58 / ATCC 33970) (Agrobacterium tumefaciens (strain C58)).